The primary structure comprises 347 residues: Protease HtpX homolog (347 aa).

The next 4 helical transmembrane spans lie at 8 to 28 (VALGLYIVGYIFMLIIAATIA), 44 to 64 (AMALTAVLVVLTTAFIIYLFV), 76 to 96 (LSFLLGLIFFVVLMNIITYFA), and 141 to 163 (AFAYGNFLTGRYVAVTSSMLALT). A Zn(2+)-binding site is contributed by His174. The active site involves Glu175. His178 provides a ligand contact to Zn(2+). 2 consecutive transmembrane segments (helical) span residues 185-205 (AIMLLFGILPSIVYYLGVTAV) and 221-241 (ILAAVGIAAVIVSFLIQLLVL). Glu248 contributes to the Zn(2+) binding site.

The protein belongs to the peptidase M48B family. Zn(2+) serves as cofactor.

Its subcellular location is the cell membrane. The polypeptide is Protease HtpX homolog (Pyrobaculum aerophilum (strain ATCC 51768 / DSM 7523 / JCM 9630 / CIP 104966 / NBRC 100827 / IM2)).